Reading from the N-terminus, the 40-residue chain is Trypsin inhibitor (40 aa).

In terms of assembly, monomer.

The catalysed reaction is Preferential cleavage: Arg-|-Xaa, Lys-|-Xaa.. Inhibits trypsin but not chymotrypsin, papain or porcine pancreatic alpha-amylase. Has insecticidal activity against A.aegypti. Functions by inhibiting the A.aegypti midgut proteases to reduce the survival of larva and adults. The chain is Trypsin inhibitor from Cassia leiandra (Marimari).